Reading from the N-terminus, the 336-residue chain is Dihydroorotate dehydrogenase (quinone) (336 aa).

FMN-binding positions include 62-66 (AGLDK) and threonine 86. A substrate-binding site is contributed by lysine 66. 111–115 (NRMGF) serves as a coordination point for substrate. Positions 139 and 172 each coordinate FMN. Asparagine 172 serves as a coordination point for substrate. Catalysis depends on serine 175, which acts as the Nucleophile. Substrate is bound at residue asparagine 177. Positions 217 and 245 each coordinate FMN. 246-247 (NT) serves as a coordination point for substrate. FMN-binding positions include glycine 268, glycine 297, and 318-319 (YS).

This sequence belongs to the dihydroorotate dehydrogenase family. Type 2 subfamily. Monomer. FMN serves as cofactor.

The protein resides in the cell membrane. It catalyses the reaction (S)-dihydroorotate + a quinone = orotate + a quinol. The protein operates within pyrimidine metabolism; UMP biosynthesis via de novo pathway; orotate from (S)-dihydroorotate (quinone route): step 1/1. In terms of biological role, catalyzes the conversion of dihydroorotate to orotate with quinone as electron acceptor. The chain is Dihydroorotate dehydrogenase (quinone) from Psychromonas ingrahamii (strain DSM 17664 / CCUG 51855 / 37).